A 422-amino-acid polypeptide reads, in one-letter code: CRISPR-associated endodeoxyribonuclease Cas12f1 (422 aa).

Residues 1 to 126 are recognition domain (REC); it reads MIKVYRYEIV…PSYKRDIPLD (126 aa). The segment at 127-211 is wedge domain (WED); that stretch reads LIKENISVNR…YLNISYDFEP (85 aa). The segment at 212–220 is linker; the sequence is QTRVLDLNK. The segment at 221–370 is ruvC-I; it reads IMGIDLGVAV…IKIDPQYTSQ (150 aa). Residues D225 and E324 contribute to the active site. The target nucleic acid-binding (TNB) stretch occupies residues 371 to 399; it reads RCSECGNIDSGNRIGQAIFKCRACGYEAN. Zn(2+) contacts are provided by C372, C375, C391, and C394. The interval 400 to 420 is ruvC-II; the sequence is ADYNAARNIAIPNIDKIIAES. D401 is an active-site residue.

Belongs to the CRISPR-associated endonuclease Cas12f family. In terms of assembly, an asymmetric homodimer. Guide RNA is probably required for dimerization. Mg(2+) is required as a cofactor. The cofactor is Zn(2+).

Functionally, CRISPR (clustered regularly interspaced short palindromic repeat), is an adaptive immune system that provides protection against mobile genetic elements (viruses, transposable elements and conjugative plasmids). CRISPR clusters contain sequences complementary to antecedent mobile elements and target invading nucleic acids. CRISPR clusters are transcribed and processed into CRISPR RNA (crRNA), which requires a trans-encoded small RNA (tracrRNA), but not this protein. Recognizes a short motif in the CRISPR repeat sequences (the 5' PAM or protospacer adjacent motif, YTT in this organism) to help distinguish self versus nonself, as targets within the CRISPR locus do not have PAMs. Has dsDNA endonuclease activity upon expression in E.coli of this protein, a mini CRISPR array and the probable tracrRNA. Plasmid cleavage is centered around positions 19-24 base pairs 3' of PAM. The mini system protects E.coli against transformation by foreign plasmids. This is CRISPR-associated endodeoxyribonuclease Cas12f1 from Sulfoacidibacillus thermotolerans (Acidibacillus sulfuroxidans).